The sequence spans 208 residues: Ras-related protein Rab-6B (208 aa).

GTP contacts are provided by residues Gly20–Thr27, Thr45, Asp68–Gln72, and Asn126–Asp129. Residues Tyr42 to Phe50 carry the Effector region motif. S-geranylgeranyl cysteine attachment occurs at residues Cys206 and Cys208. Cys208 carries the cysteine methyl ester modification.

The protein belongs to the small GTPase superfamily. Rab family. Interacts (GTP-bound) with BICD1 (via C-terminus); the interaction is direct. Interacts (GDP-bound) with DYNLRB1. Interacts (GTP-bound) with APBA1/MINT1. Interacts (GTP-bound) with VPS13B.

The protein localises to the golgi apparatus membrane. It localises to the endoplasmic reticulum-Golgi intermediate compartment. Its subcellular location is the cytoplasmic vesicle. It carries out the reaction GTP + H2O = GDP + phosphate + H(+). With respect to regulation, regulated by guanine nucleotide exchange factors (GEFs) which promote the exchange of bound GDP for free GTP, GTPase activating proteins (GAPs) which increase the GTP hydrolysis activity, and GDP dissociation inhibitors which inhibit the dissociation of the nucleotide from the GTPase. The small GTPases Rab are key regulators of intracellular membrane trafficking, from the formation of transport vesicles to their fusion with membranes. Rabs cycle between active GTP-bound and inactive GDP-bound states. In their active state, drive transport of vesicular carriers from donor organelles to acceptor organelles to regulate the membrane traffic that maintains organelle identity and morphology. Recruits VPS13B to the Golgi membrane. Regulates the compacted morphology of the Golgi. Seems to have a role in retrograde membrane traffic at the level of the Golgi complex. May function in retrograde transport in neuronal cells. Plays a role in neuron projection development. The polypeptide is Ras-related protein Rab-6B (RAB6B) (Bos taurus (Bovine)).